Here is a 486-residue protein sequence, read N- to C-terminus: uncharacterized protein (486 aa).

This sequence belongs to the UbiD family.

This is an uncharacterized protein from Aquifex aeolicus (strain VF5).